A 243-amino-acid chain; its full sequence is Clathrin light chain A (243 aa).

Position 1 is a blocked amino end (Met) (M1). 2 disordered regions span residues 1–22 (MAELDPFGVPAGGPALGNGVAG) and 49–87 (ILDGGAPGSQPHGEPPGIPDAVDGVTNGDYYQESNGPTD). The segment covering 10–20 (PAGGPALGNGV) has biased composition (gly residues). Residues 95–157 (VDRLQSEPES…QLQKTKANNR (63 aa)) are involved in binding clathrin heavy chain. Phosphoserine is present on residues S100 and S201. An N6-acetyllysine modification is found at K218. Phosphoserine is present on S231. At K237 the chain carries N6-acetyllysine.

It belongs to the clathrin light chain family. As to quaternary structure, clathrin coats are formed from molecules containing 3 heavy chains and 3 light chains. Interacts with CALY; the interaction stimulates clathrin self-assembly and clathrin-mediated endocytosis. Interacts with CKAP5 and TACC3 forming the TACC3/ch-TOG/clathrin complex located at spindle inter-microtubules bridges; the complex implicates clathrin triskelions.

The protein localises to the cytoplasmic vesicle membrane. Its subcellular location is the membrane. It is found in the coated pit. The protein resides in the cytoplasm. It localises to the cytoskeleton. The protein localises to the spindle. In terms of biological role, clathrin is the major protein of the polyhedral coat of coated pits and vesicles. Acts as a component of the TACC3/ch-TOG/clathrin complex proposed to contribute to stabilization of kinetochore fibers of the mitotic spindle by acting as inter-microtubule bridge. This Bos taurus (Bovine) protein is Clathrin light chain A (CLTA).